Here is a 1186-residue protein sequence, read N- to C-terminus: DNA-directed RNA polymerase subunit beta (1186 aa).

The segment at 1149-1186 (KEEDDDPSTSSDDLGFNIGARPDAAAKEDQVAEEPEFQ) is disordered.

This sequence belongs to the RNA polymerase beta chain family. In terms of assembly, the RNAP catalytic core consists of 2 alpha, 1 beta, 1 beta' and 1 omega subunit. When a sigma factor is associated with the core the holoenzyme is formed, which can initiate transcription.

It carries out the reaction RNA(n) + a ribonucleoside 5'-triphosphate = RNA(n+1) + diphosphate. Its function is as follows. DNA-dependent RNA polymerase catalyzes the transcription of DNA into RNA using the four ribonucleoside triphosphates as substrates. The chain is DNA-directed RNA polymerase subunit beta from Bifidobacterium adolescentis (strain ATCC 15703 / DSM 20083 / NCTC 11814 / E194a).